Reading from the N-terminus, the 241-residue chain is MALPGLKRILLKLSGEALMGPSPFGIDPETVASMAAEVKEAKDRGLEICLVIGGGNIFRGMAGAAKGMDRAQADYMGMLATVMNALAMQNALEQLGVQTRVQSAIEMDKVCEPVIRRRAERHMEKGRVVIFAAGVGAPYFTTDSGAALRAAEMKCDALLKGTSVDGVYNADPKQDANAVRYDRLSYDRVLADNLKVMDASAVALCRDNHIPIVVFNIREPGNLARVLAGEGVSTVVGDGAV.

K12–G15 lines the ATP pocket. G54 is a UMP binding site. ATP is bound by residues G55 and R59. UMP is bound by residues D74 and V135–T142. The ATP site is built by T162, Y168, and D171.

It belongs to the UMP kinase family. As to quaternary structure, homohexamer.

Its subcellular location is the cytoplasm. It catalyses the reaction UMP + ATP = UDP + ADP. Its pathway is pyrimidine metabolism; CTP biosynthesis via de novo pathway; UDP from UMP (UMPK route): step 1/1. Its activity is regulated as follows. Inhibited by UTP. Catalyzes the reversible phosphorylation of UMP to UDP. The protein is Uridylate kinase of Sphingopyxis alaskensis (strain DSM 13593 / LMG 18877 / RB2256) (Sphingomonas alaskensis).